The primary structure comprises 76 residues: UPF0346 protein LBUL_1194 (76 aa).

Belongs to the UPF0346 family.

In Lactobacillus delbrueckii subsp. bulgaricus (strain ATCC BAA-365 / Lb-18), this protein is UPF0346 protein LBUL_1194.